Here is a 79-residue protein sequence, read N- to C-terminus: Acyl carrier protein (79 aa).

The Carrier domain occupies 1–79 (MTKEQILVDV…DVVSYIETQV (79 aa)). Serine 39 bears the O-(pantetheine 4'-phosphoryl)serine mark.

The protein belongs to the acyl carrier protein (ACP) family. In terms of processing, 4'-phosphopantetheine is transferred from CoA to a specific serine of apo-ACP by AcpS. This modification is essential for activity because fatty acids are bound in thioester linkage to the sulfhydryl of the prosthetic group.

The protein localises to the cytoplasm. Its pathway is lipid metabolism; fatty acid biosynthesis. Its function is as follows. Carrier of the growing fatty acid chain in fatty acid biosynthesis. The sequence is that of Acyl carrier protein from Exiguobacterium sibiricum (strain DSM 17290 / CCUG 55495 / CIP 109462 / JCM 13490 / 255-15).